The sequence spans 179 residues: Peptide deformylase 2 (179 aa).

Fe cation contacts are provided by cysteine 102 and histidine 144. The active site involves glutamate 145. Histidine 148 provides a ligand contact to Fe cation.

It belongs to the polypeptide deformylase family. Requires Fe(2+) as cofactor.

It catalyses the reaction N-terminal N-formyl-L-methionyl-[peptide] + H2O = N-terminal L-methionyl-[peptide] + formate. In terms of biological role, removes the formyl group from the N-terminal Met of newly synthesized proteins. Requires at least a dipeptide for an efficient rate of reaction. N-terminal L-methionine is a prerequisite for activity but the enzyme has broad specificity at other positions. This Nostoc sp. (strain PCC 7120 / SAG 25.82 / UTEX 2576) protein is Peptide deformylase 2.